A 102-amino-acid chain; its full sequence is Small ribosomal subunit protein uS10 (102 aa).

Belongs to the universal ribosomal protein uS10 family. In terms of assembly, part of the 30S ribosomal subunit.

In terms of biological role, involved in the binding of tRNA to the ribosomes. The protein is Small ribosomal subunit protein uS10 of Sulfurihydrogenibium sp. (strain YO3AOP1).